The primary structure comprises 264 residues: MHSLLGLLLVFAGSTFALYLLSTRLPRASTLVSAEESGDRSLWFPSDLAELRELSEVLREYRKEHQVYVFLLFCSAYLYKQSFAIPGSSFLNVLAGALFGPWLGLLLCCVLTSVGATGCYLLSSVFGKQLVVFYFPDKVALLQKKVEENRNGLFFFLLFLRLFPMTPNWFLNLSAPILNIPIVQFFFSVLIGLIPYNFICVQTGSILSTLTSLDALFSWETAFKLLAIALVALVPGTLIKKFSQKDLRLKETSNTHSLNSRKVT.

The first 17 residues, 1–17 (MHSLLGLLLVFAGSTFA), serve as a signal peptide directing secretion. Transmembrane regions (helical) follow at residues 67–87 (VYVFLLFCSAYLYKQSFAIPG), 90–110 (FLNVLAGALFGPWLGLLLCCV), 153–173 (LFFFLLFLRLFPMTPNWFLNL), 175–195 (APILNIPIVQFFFSVLIGLIP), and 219–239 (WETAFKLLAIALVALVPGTLI). Residues 96 to 207 (GALFGPWLGL…FICVQTGSIL (112 aa)) form a VTT domain region.

The protein belongs to the TMEM41 family.

The protein resides in the membrane. The protein is Transmembrane protein 41A (TMEM41A) of Bos taurus (Bovine).